Consider the following 592-residue polypeptide: Guanylate-binding protein 1 (592 aa).

Residues 1–311 are GTPase domain (Globular); the sequence is MASEIHMTGP…NAISSGDLPC (311 aa). A GB1/RHD3-type G domain is found at 35-278; it reads TQPMVVVAIV…FCSYIFSNSK (244 aa). Residues 45–52, 67–69, and 97–101 contribute to the GTP site; these read GLYRTGKS, LGS, and DTEGL. Ser-156 bears the Phosphoserine mark. Cys-589 bears the Cysteine methyl ester mark. Residue Cys-589 is the site of S-farnesyl cysteine attachment. Phosphothreonine is present on Thr-590. A propeptide spans 590 to 592 (removed in mature form); sequence TIS.

It belongs to the TRAFAC class dynamin-like GTPase superfamily. GB1/RHD3 GTPase family. GB1 subfamily. In terms of assembly, homodimer; homodimerization occurs upon GTP-binding and is required for the second hydrolysis step from GDP to GMP. Undergoes conformational changes and oligomerization upon GTP-binding and hydrolysis. Heterodimer with other family members, including GBP2, GBP3, GBP4 and GBP5. Dimerization regulates subcellular location to membranous structures. Interacts with SQSTM1. Interacts (when phosphorylated) with 14-3-3 protein sigma (SFN); leading to GBP1 retention in the cytosol and inactivation. Post-translationally, isoprenylation is required for proper subcellular location. In terms of processing, phosphorylated at Ser-156 by PIM1 in absence of infection, inhibits GBP1: phosphorylation promotes interaction with 14-3-3 protein sigma (SFN), leading to GBP1 retention in the cytosol. Dephosphorylated in response to infection, liberating GBP1.

Its subcellular location is the cytoplasmic vesicle membrane. The protein localises to the golgi apparatus membrane. It is found in the cell membrane. It localises to the cytoplasm. The protein resides in the cytosol. Its subcellular location is the secreted. The catalysed reaction is GTP + H2O = GDP + phosphate + H(+). It carries out the reaction GDP + H2O = GMP + phosphate + H(+). Its function is as follows. Interferon (IFN)-inducible GTPase that plays important roles in innate immunity against a diverse range of bacterial, viral and protozoan pathogens. Hydrolyzes GTP to GMP in two consecutive cleavage reactions: GTP is first hydrolyzed to GDP and then to GMP in a processive manner. Following infection, recruited to the pathogen-containing vacuoles or vacuole-escaped bacteria and promotes both inflammasome assembly and autophagy. Acts as a positive regulator of inflammasome assembly by facilitating the detection of inflammasome ligands from pathogens. Involved in the lysis of pathogen-containing vacuoles, releasing pathogens into the cytosol. Following pathogen release in the cytosol, forms a protein coat in a GTPase-dependent manner that encapsulates pathogens and promotes the detection of ligands by pattern recognition receptors. Plays a key role in inflammasome assembly in response to infection by Gram-negative bacteria: following pathogen release in the cytosol, forms a protein coat that encapsulates Gram-negative bacteria and directly binds to lipopolysaccharide (LPS), disrupting the O-antigen barrier and unmasking lipid A that is that detected by the non-canonical inflammasome effector CASP4/CASP11. Also promotes recruitment of proteins that mediate bacterial cytolysis, leading to release double-stranded DNA (dsDNA) that activates the AIM2 inflammasome. Involved in autophagy by regulating bacteriolytic peptide generation via its interaction with ubiquitin-binding protein SQSTM1, which delivers monoubiquitinated proteins to autolysosomes for the generation of bacteriolytic peptides. Confers protection to several pathogens, including the bacterial pathogens L.monocytogenes and M.bovis BCG as well as the protozoan pathogen T.gondii. Exhibits antiviral activity against influenza virus. This Pongo abelii (Sumatran orangutan) protein is Guanylate-binding protein 1 (GBP1).